The chain runs to 320 residues: Cytochrome f (320 aa).

Positions 1–35 (MENKNTFSWVKEQMTRSISVSIMIYVITQTSISNA) are cleaved as a signal peptide. Positions 36, 56, 59, and 60 each coordinate heme. The chain crosses the membrane as a helical span at residues 286 to 306 (VQGLLFFFASVILAQVFLVLK).

This sequence belongs to the cytochrome f family. In terms of assembly, the 4 large subunits of the cytochrome b6-f complex are cytochrome b6, subunit IV (17 kDa polypeptide, petD), cytochrome f and the Rieske protein, while the 4 small subunits are PetG, PetL, PetM and PetN. The complex functions as a dimer. Heme is required as a cofactor.

The protein resides in the plastid. It localises to the chloroplast thylakoid membrane. Its function is as follows. Component of the cytochrome b6-f complex, which mediates electron transfer between photosystem II (PSII) and photosystem I (PSI), cyclic electron flow around PSI, and state transitions. The sequence is that of Cytochrome f from Lolium perenne (Perennial ryegrass).